The following is a 279-amino-acid chain: Type II iodothyronine deiodinase (279 aa).

Residues 1–7 (MGLLSAD) are Lumenal-facing. The chain crosses the membrane as a helical; Signal-anchor for type III membrane protein span at residues 8 to 28 (LLITLQILPVFFSNCLFLALY). At 29–279 (DSVILLKHMV…TEDLSTDVSL (251 aa)) the chain is on the cytoplasmic side. Residue selenocysteine 132 is part of the active site. Non-standard amino acids (selenocysteine) are located at selenocysteine 132 and selenocysteine 265.

The protein belongs to the iodothyronine deiodinase family. Predominantly monomer. Can form homodimers but homodimerization is not essential for enzyme activity. Highly expressed in liver and in various parts of the brain including telencephalon, hippocampus, cerebellum, and brain stem, and weakly expressed in thyroid, lung, and small intestine. Not detected in skeletal muscle, heart atria or ventricle, gizzard or kidney.

Its subcellular location is the endoplasmic reticulum membrane. The enzyme catalyses 3,3',5-triiodo-L-thyronine + iodide + A + H(+) = L-thyroxine + AH2. The catalysed reaction is 3,3'-diiodo-L-thyronine + iodide + A + H(+) = 3,3',5'-triiodo-L-thyronine + AH2. It catalyses the reaction 3'-iodo-L-thyronine + iodide + A + H(+) = 3',5'-diiodo-L-thyronine + AH2. It carries out the reaction 3,3'-diiodothyronamine + iodide + A + H(+) = 3,3',5'-triiodothyronamine + AH2. The enzyme catalyses 3'-iodothyronamine + iodide + A + H(+) = 3',5'-diiodothyronamine + AH2. Not inhibited by N(6)-propylthiouracil. Functionally, plays a crucial role in the metabolism of thyroid hormones (TH) and has specific roles in TH activation and inactivation by deiodination. Catalyzes the deiodination of L-thyroxine (T4) to 3,5,3'-triiodothyronine (T3) and 3,3',5'-triiodothyronine (rT3) to 3,3'-diiodothyronine (3,3'-T2) via outer-ring deiodination (ORD). Catalyzes the deiodination of 3',5'-diiodothyronine (3',5'-T2) to 3'-monoiodothyronine (3'-T1) via ORD. Catalyzes the phenolic ring deiodinations of 3,3',5'-triiodothyronamine and 3',5'- diiodothyronamine. The sequence is that of Type II iodothyronine deiodinase (DIO2) from Gallus gallus (Chicken).